The chain runs to 100 residues: Urease subunit gamma (100 aa).

It belongs to the urease gamma subunit family. Heterotrimer of UreA (gamma), UreB (beta) and UreC (alpha) subunits. Three heterotrimers associate to form the active enzyme.

The protein localises to the cytoplasm. The catalysed reaction is urea + 2 H2O + H(+) = hydrogencarbonate + 2 NH4(+). It participates in nitrogen metabolism; urea degradation; CO(2) and NH(3) from urea (urease route): step 1/1. This Prochlorococcus marinus (strain MIT 9312) protein is Urease subunit gamma.